The chain runs to 313 residues: tRNA dimethylallyltransferase (313 aa).

ATP is bound at residue Gly12 to Ser19. Residue Thr14 to Ser19 participates in substrate binding. Interaction with substrate tRNA stretches follow at residues Asp37 to Gln40 and Gln161 to Arg165.

The protein belongs to the IPP transferase family. As to quaternary structure, monomer. Mg(2+) serves as cofactor.

The catalysed reaction is adenosine(37) in tRNA + dimethylallyl diphosphate = N(6)-dimethylallyladenosine(37) in tRNA + diphosphate. In terms of biological role, catalyzes the transfer of a dimethylallyl group onto the adenine at position 37 in tRNAs that read codons beginning with uridine, leading to the formation of N6-(dimethylallyl)adenosine (i(6)A). In Pelagibacter ubique (strain HTCC1062), this protein is tRNA dimethylallyltransferase.